The primary structure comprises 313 residues: Biotin synthase (313 aa).

Residues 28-258 (NFGNDIELCS…LFPQARLRLS (231 aa)) enclose the Radical SAM core domain. Residues C46, C50, and C53 each contribute to the [4Fe-4S] cluster site. Residues C90, C121, C181, and R256 each coordinate [2Fe-2S] cluster.

The protein belongs to the radical SAM superfamily. Biotin synthase family. In terms of assembly, homodimer. The cofactor is [4Fe-4S] cluster. Requires [2Fe-2S] cluster as cofactor.

It carries out the reaction (4R,5S)-dethiobiotin + (sulfur carrier)-SH + 2 reduced [2Fe-2S]-[ferredoxin] + 2 S-adenosyl-L-methionine = (sulfur carrier)-H + biotin + 2 5'-deoxyadenosine + 2 L-methionine + 2 oxidized [2Fe-2S]-[ferredoxin]. It participates in cofactor biosynthesis; biotin biosynthesis; biotin from 7,8-diaminononanoate: step 2/2. Its function is as follows. Catalyzes the conversion of dethiobiotin (DTB) to biotin by the insertion of a sulfur atom into dethiobiotin via a radical-based mechanism. The polypeptide is Biotin synthase (Francisella tularensis subsp. tularensis (strain WY96-3418)).